We begin with the raw amino-acid sequence, 250 residues long: Probable transcriptional regulatory protein Mmc1_0479 (250 aa).

This sequence belongs to the TACO1 family.

The protein localises to the cytoplasm. This Magnetococcus marinus (strain ATCC BAA-1437 / JCM 17883 / MC-1) protein is Probable transcriptional regulatory protein Mmc1_0479.